The primary structure comprises 279 residues: Osmoprotective compounds uptake permease protein GgtC (279 aa).

The next 7 helical transmembrane spans lie at 7–27, 58–78, 90–110, 120–140, 146–166, 202–222, and 247–267; these read LLFL…LSFF, LWLV…AVLV, IIFL…KFVY, IGLL…WLVE, FALI…ILSA, LLVV…IVFV, and FGRG…VMIT. Positions 53-270 constitute an ABC transmembrane type-1 domain; the sequence is FRNNLLWLVL…IVPVMITNIR (218 aa).

The protein belongs to the binding-protein-dependent transport system permease family. The complex is composed of two ATP-binding proteins (GgtA), two transmembrane proteins (GgtC and GgtD) and a solute-binding protein (GgtB).

Its subcellular location is the cell membrane. Its function is as follows. Part of the ABC transporter complex GgtABCD involved in the uptake of the osmoprotective compounds glucosylglycerol (GG), sucrose and trehalose. Responsible for the translocation of the substrate across the membrane. This chain is Osmoprotective compounds uptake permease protein GgtC, found in Synechocystis sp. (strain ATCC 27184 / PCC 6803 / Kazusa).